Consider the following 203-residue polypeptide: Recombination protein RecR (203 aa).

The segment at 58-73 (CDYCGNLDVVSICNIC) adopts a C4-type zinc-finger fold. The Toprim domain occupies 81–177 (SIIAIVESVA…KISKLASGIP (97 aa)).

Belongs to the RecR family.

In terms of biological role, may play a role in DNA repair. It seems to be involved in an RecBC-independent recombinational process of DNA repair. It may act with RecF and RecO. The protein is Recombination protein RecR of Orientia tsutsugamushi (strain Boryong) (Rickettsia tsutsugamushi).